Consider the following 290-residue polypeptide: Bifunctional protein FolD (290 aa).

NADP(+)-binding positions include 165–167 (GRS), serine 190, and isoleucine 231.

This sequence belongs to the tetrahydrofolate dehydrogenase/cyclohydrolase family. Homodimer.

The enzyme catalyses (6R)-5,10-methylene-5,6,7,8-tetrahydrofolate + NADP(+) = (6R)-5,10-methenyltetrahydrofolate + NADPH. The catalysed reaction is (6R)-5,10-methenyltetrahydrofolate + H2O = (6R)-10-formyltetrahydrofolate + H(+). It participates in one-carbon metabolism; tetrahydrofolate interconversion. In terms of biological role, catalyzes the oxidation of 5,10-methylenetetrahydrofolate to 5,10-methenyltetrahydrofolate and then the hydrolysis of 5,10-methenyltetrahydrofolate to 10-formyltetrahydrofolate. This Aromatoleum aromaticum (strain DSM 19018 / LMG 30748 / EbN1) (Azoarcus sp. (strain EbN1)) protein is Bifunctional protein FolD.